A 615-amino-acid chain; its full sequence is DNA mismatch repair protein MutL (615 aa).

The disordered stretch occupies residues 363 to 397; the sequence is FAEPAAREPVAPRYSPAPASGSRPAAPWPNAQPGY. The segment covering 364–387 has biased composition (low complexity); that stretch reads AEPAAREPVAPRYSPAPASGSRPA.

Belongs to the DNA mismatch repair MutL/HexB family.

Functionally, this protein is involved in the repair of mismatches in DNA. It is required for dam-dependent methyl-directed DNA mismatch repair. May act as a 'molecular matchmaker', a protein that promotes the formation of a stable complex between two or more DNA-binding proteins in an ATP-dependent manner without itself being part of a final effector complex. This chain is DNA mismatch repair protein MutL, found in Shigella flexneri.